A 273-amino-acid polypeptide reads, in one-letter code: Large ribosomal subunit protein uL2 (273 aa).

The tract at residues 221–262 is disordered; it reads RGTAMNPVDHPHGGGEGRNFGKHPVTPWGVQTKGKKTRHNKR. Basic residues predominate over residues 253-262; it reads KGKKTRHNKR.

The protein belongs to the universal ribosomal protein uL2 family. Part of the 50S ribosomal subunit. Forms a bridge to the 30S subunit in the 70S ribosome.

In terms of biological role, one of the primary rRNA binding proteins. Required for association of the 30S and 50S subunits to form the 70S ribosome, for tRNA binding and peptide bond formation. It has been suggested to have peptidyltransferase activity; this is somewhat controversial. Makes several contacts with the 16S rRNA in the 70S ribosome. The chain is Large ribosomal subunit protein uL2 from Haemophilus ducreyi (strain 35000HP / ATCC 700724).